We begin with the raw amino-acid sequence, 88 residues long: Putative regulatory protein PCC7424_3427 (88 aa).

This sequence belongs to the RemA family.

The sequence is that of Putative regulatory protein PCC7424_3427 from Gloeothece citriformis (strain PCC 7424) (Cyanothece sp. (strain PCC 7424)).